The primary structure comprises 189 residues: Ornithine decarboxylase antizyme 2 (189 aa).

The residue at position 186 (serine 186) is a Phosphoserine.

Belongs to the ODC antizyme family. In terms of assembly, interacts with ODC1 and thereby sterically blocks ODC homodimerization. Interacts with AZIN2; this interaction disrupts the interaction between the antizyme and ODC1.

Its subcellular location is the nucleus. Ornithine decarboxylase (ODC) antizyme protein that negatively regulates ODC activity and intracellular polyamine biosynthesis and uptake in response to increased intracellular polyamine levels. Binds to ODC monomers, inhibiting the assembly of the functional ODC homodimers. Does not target the ODC monomers for degradation, which allows a protein synthesis-independent restoration of ODC activity. Involved in the translocation of AZIN2 from ER-Golgi intermediate compartment (ERGIC) to the cytosol. The chain is Ornithine decarboxylase antizyme 2 (OAZ2) from Homo sapiens (Human).